A 513-amino-acid polypeptide reads, in one-letter code: ATP synthase subunit alpha 1 (513 aa).

Residue 169 to 176 (GDRQCGKT) coordinates ATP.

Belongs to the ATPase alpha/beta chains family. In terms of assembly, F-type ATPases have 2 components, CF(1) - the catalytic core - and CF(0) - the membrane proton channel. CF(1) has five subunits: alpha(3), beta(3), gamma(1), delta(1), epsilon(1). CF(0) has three main subunits: a(1), b(2) and c(9-12). The alpha and beta chains form an alternating ring which encloses part of the gamma chain. CF(1) is attached to CF(0) by a central stalk formed by the gamma and epsilon chains, while a peripheral stalk is formed by the delta and b chains.

It localises to the cell inner membrane. The catalysed reaction is ATP + H2O + 4 H(+)(in) = ADP + phosphate + 5 H(+)(out). In terms of biological role, produces ATP from ADP in the presence of a proton gradient across the membrane. The alpha chain is a regulatory subunit. The protein is ATP synthase subunit alpha 1 of Burkholderia thailandensis (strain ATCC 700388 / DSM 13276 / CCUG 48851 / CIP 106301 / E264).